We begin with the raw amino-acid sequence, 169 residues long: Large ribosomal subunit protein uL10 (169 aa).

This sequence belongs to the universal ribosomal protein uL10 family. In terms of assembly, part of the ribosomal stalk of the 50S ribosomal subunit. The N-terminus interacts with L11 and the large rRNA to form the base of the stalk. The C-terminus forms an elongated spine to which L12 dimers bind in a sequential fashion forming a multimeric L10(L12)X complex.

Its function is as follows. Forms part of the ribosomal stalk, playing a central role in the interaction of the ribosome with GTP-bound translation factors. The chain is Large ribosomal subunit protein uL10 from Staphylococcus saprophyticus subsp. saprophyticus (strain ATCC 15305 / DSM 20229 / NCIMB 8711 / NCTC 7292 / S-41).